Reading from the N-terminus, the 116-residue chain is CDKN2AIP N-terminal-like protein (116 aa).

The residue at position 1 (methionine 1) is an N-acetylmethionine. Positions alanine 24–serine 116 constitute an XRN2-binding (XTBD) domain.

The protein belongs to the CARF family. In terms of assembly, interacts with XRN2; the interaction is direct.

This Mus musculus (Mouse) protein is CDKN2AIP N-terminal-like protein (Cdkn2aipnl).